Consider the following 204-residue polypeptide: Holliday junction branch migration complex subunit RuvA (204 aa).

Residues 1–64 are domain I; that stretch reads MIGRLQGILL…EDAHLLFGFA (64 aa). The tract at residues 65–143 is domain II; that stretch reads QKTDRTLFRE…GVKQSDFFVE (79 aa). The tract at residues 144 to 155 is flexible linker; the sequence is STHIPLSPSIES. The interval 156–204 is domain III; that stretch reads HSESSSDEAISALIALGYKPAEAEKMVKRVAKPELTSEQVIREALKAAL.

Belongs to the RuvA family. As to quaternary structure, homotetramer. Forms an RuvA(8)-RuvB(12)-Holliday junction (HJ) complex. HJ DNA is sandwiched between 2 RuvA tetramers; dsDNA enters through RuvA and exits via RuvB. An RuvB hexamer assembles on each DNA strand where it exits the tetramer. Each RuvB hexamer is contacted by two RuvA subunits (via domain III) on 2 adjacent RuvB subunits; this complex drives branch migration. In the full resolvosome a probable DNA-RuvA(4)-RuvB(12)-RuvC(2) complex forms which resolves the HJ.

It is found in the cytoplasm. In terms of biological role, the RuvA-RuvB-RuvC complex processes Holliday junction (HJ) DNA during genetic recombination and DNA repair, while the RuvA-RuvB complex plays an important role in the rescue of blocked DNA replication forks via replication fork reversal (RFR). RuvA specifically binds to HJ cruciform DNA, conferring on it an open structure. The RuvB hexamer acts as an ATP-dependent pump, pulling dsDNA into and through the RuvAB complex. HJ branch migration allows RuvC to scan DNA until it finds its consensus sequence, where it cleaves and resolves the cruciform DNA. The polypeptide is Holliday junction branch migration complex subunit RuvA (Haemophilus influenzae (strain PittGG)).